The sequence spans 368 residues: tRNA-specific 2-thiouridylase MnmA (368 aa).

ATP is bound by residues 11–18 (GMSGGVDS) and M37. The segment at 97–99 (NPD) is interaction with target base in tRNA. The Nucleophile role is filled by C102. A disulfide bridge links C102 with C199. Position 127 (G127) interacts with ATP. The interaction with tRNA stretch occupies residues 149–151 (KDQ). C199 acts as the Cysteine persulfide intermediate in catalysis. Positions 311 to 312 (RY) are interaction with tRNA.

It belongs to the MnmA/TRMU family. As to quaternary structure, interacts with TusE.

The protein resides in the cytoplasm. The enzyme catalyses S-sulfanyl-L-cysteinyl-[protein] + uridine(34) in tRNA + AH2 + ATP = 2-thiouridine(34) in tRNA + L-cysteinyl-[protein] + A + AMP + diphosphate + H(+). Catalyzes the 2-thiolation of uridine at the wobble position (U34) of tRNA(Lys), tRNA(Glu) and tRNA(Gln), leading to the formation of s(2)U34, the first step of tRNA-mnm(5)s(2)U34 synthesis. Sulfur is provided by IscS, via a sulfur-relay system. Binds ATP and its substrate tRNAs. The polypeptide is tRNA-specific 2-thiouridylase MnmA (Escherichia coli (strain SMS-3-5 / SECEC)).